Here is a 1097-residue protein sequence, read N- to C-terminus: Chitin synthase 2 (1097 aa).

Residues 1–46 (MAGYGHSTAGGFGSGSGSGPPGPQYMLPQYDEGDDPDADATPAGQG) are disordered. Residues 1 to 748 (MAGYGHSTAG…HVEFLYHLLQ (748 aa)) are Extracellular-facing. Over residues 8-19 (TAGGFGSGSGSG) the composition is skewed to gly residues. Asn-55 carries an N-linked (GlcNAc...) asparagine glycan. Disordered regions lie at residues 148–217 (SGHG…YPRY) and 259–322 (SSQI…RPPQ). Over residues 284–296 (STTYSSNTGTSAS) the composition is skewed to polar residues. Over residues 299–313 (DKFEHYGPIPEEGKH) the composition is skewed to basic and acidic residues. Residues Asn-416 and Asn-424 are each glycosylated (N-linked (GlcNAc...) asparagine). The helical transmembrane segment at 749–769 (LLFTYFSLANFYLAFYFIAGG) threads the bilayer. The Cytoplasmic portion of the chain corresponds to 770–786 (LADPHVDPFNSDGHVAR). Residues 787–807 (IIFNILRYVCVLLICTQFILS) form a helical membrane-spanning segment. The Extracellular segment spans residues 808 to 821 (LGNRPQGAKRMYLA). A helical membrane pass occupies residues 822 to 842 (SMIIYAVIMVYTTFATIFIVV). Topologically, residues 843–865 (RQIQPSQKSDDKPDLELGNNVFT) are cytoplasmic. A helical membrane pass occupies residues 866-886 (NLIVSVASTLGLYFVMSFLYL). The Extracellular segment spans residues 887-894 (DPWHMFTS). Residues 895–915 (AIQYFVLLPSYICTLQIYAFC) form a helical membrane-spanning segment. Residues 916-993 (NTHDVTWGTK…QDYYKSVRTY (78 aa)) are Cytoplasmic-facing. The helical transmembrane segment at 994-1014 (MVVSWMVANATLAMAVSEAYG) threads the bilayer. The Extracellular portion of the chain corresponds to 1015–1025 (DSEIGDNFYLR). Residues 1026–1046 (FILWAVAALALFRALGSTTFA) form a helical membrane-spanning segment. The Cytoplasmic segment spans residues 1047-1097 (AINLVSALVEGRVRLRLNMKGFRWIKEKWGDADVKGKFEGLGDRARGLARR).

It belongs to the chitin synthase family.

It is found in the cell membrane. It carries out the reaction [(1-&gt;4)-N-acetyl-beta-D-glucosaminyl](n) + UDP-N-acetyl-alpha-D-glucosamine = [(1-&gt;4)-N-acetyl-beta-D-glucosaminyl](n+1) + UDP + H(+). In terms of biological role, polymerizes chitin, a structural polymer of the cell wall and septum, by transferring the sugar moiety of UDP-GlcNAc to the non-reducing end of the growing chitin polymer. This Neurospora crassa (strain ATCC 24698 / 74-OR23-1A / CBS 708.71 / DSM 1257 / FGSC 987) protein is Chitin synthase 2 (chs-2).